Reading from the N-terminus, the 61-residue chain is Small ribosomal subunit protein uS14 (61 aa).

Zn(2+) is bound by residues Cys-24, Cys-27, Cys-40, and Cys-43.

The protein belongs to the universal ribosomal protein uS14 family. Zinc-binding uS14 subfamily. Part of the 30S ribosomal subunit. Contacts proteins S3 and S10. Zn(2+) is required as a cofactor.

In terms of biological role, binds 16S rRNA, required for the assembly of 30S particles and may also be responsible for determining the conformation of the 16S rRNA at the A site. In Acidithiobacillus ferrooxidans (strain ATCC 23270 / DSM 14882 / CIP 104768 / NCIMB 8455) (Ferrobacillus ferrooxidans (strain ATCC 23270)), this protein is Small ribosomal subunit protein uS14.